The sequence spans 387 residues: S-adenosylmethionine synthase (387 aa).

Residue H16 coordinates ATP. D18 contributes to the Mg(2+) binding site. E44 contacts K(+). Residues E57 and Q100 each contribute to the L-methionine site. Positions 100–110 are flexible loop; the sequence is QSPDIAQGVDR. ATP-binding positions include 167–169, 232–233, D241, 247–248, A264, and K268; these read DAK, RF, and RK. L-methionine is bound at residue D241. K272 contributes to the L-methionine binding site.

It belongs to the AdoMet synthase family. As to quaternary structure, homotetramer; dimer of dimers. Requires Mg(2+) as cofactor. K(+) is required as a cofactor.

It is found in the cytoplasm. The enzyme catalyses L-methionine + ATP + H2O = S-adenosyl-L-methionine + phosphate + diphosphate. It functions in the pathway amino-acid biosynthesis; S-adenosyl-L-methionine biosynthesis; S-adenosyl-L-methionine from L-methionine: step 1/1. Its function is as follows. Catalyzes the formation of S-adenosylmethionine (AdoMet) from methionine and ATP. The overall synthetic reaction is composed of two sequential steps, AdoMet formation and the subsequent tripolyphosphate hydrolysis which occurs prior to release of AdoMet from the enzyme. This is S-adenosylmethionine synthase from Cupriavidus necator (strain ATCC 17699 / DSM 428 / KCTC 22496 / NCIMB 10442 / H16 / Stanier 337) (Ralstonia eutropha).